Reading from the N-terminus, the 133-residue chain is DNA-directed RNA polymerase subunit omega (133 aa).

This sequence belongs to the RNA polymerase subunit omega family. In terms of assembly, the RNAP catalytic core consists of 2 alpha, 1 beta, 1 beta' and 1 omega subunit. When a sigma factor is associated with the core the holoenzyme is formed, which can initiate transcription.

The catalysed reaction is RNA(n) + a ribonucleoside 5'-triphosphate = RNA(n+1) + diphosphate. Its function is as follows. Promotes RNA polymerase assembly. Latches the N- and C-terminal regions of the beta' subunit thereby facilitating its interaction with the beta and alpha subunits. This is DNA-directed RNA polymerase subunit omega from Brucella canis (strain ATCC 23365 / NCTC 10854 / RM-666).